The primary structure comprises 94 residues: Co-chaperonin GroES (94 aa).

This sequence belongs to the GroES chaperonin family. As to quaternary structure, heptamer of 7 subunits arranged in a ring. Interacts with the chaperonin GroEL.

It is found in the cytoplasm. Functionally, together with the chaperonin GroEL, plays an essential role in assisting protein folding. The GroEL-GroES system forms a nano-cage that allows encapsulation of the non-native substrate proteins and provides a physical environment optimized to promote and accelerate protein folding. GroES binds to the apical surface of the GroEL ring, thereby capping the opening of the GroEL channel. The polypeptide is Co-chaperonin GroES (Halothermothrix orenii (strain H 168 / OCM 544 / DSM 9562)).